We begin with the raw amino-acid sequence, 407 residues long: Tyrosine--tRNA ligase (407 aa).

L-tyrosine is bound at residue Y35. The short motif at 40 to 49 is the 'HIGH' region element; the sequence is PTADSLHVGH. 2 residues coordinate L-tyrosine: Y168 and Q172. The 'KMSKS' region signature appears at 228-232; the sequence is KMGKT. K231 is an ATP binding site. In terms of domain architecture, S4 RNA-binding spans 341–405; it reads NSLVDLLAKC…RGKKNFNRIV (65 aa).

This sequence belongs to the class-I aminoacyl-tRNA synthetase family. TyrS type 1 subfamily. Homodimer.

It is found in the cytoplasm. It carries out the reaction tRNA(Tyr) + L-tyrosine + ATP = L-tyrosyl-tRNA(Tyr) + AMP + diphosphate + H(+). Its function is as follows. Catalyzes the attachment of tyrosine to tRNA(Tyr) in a two-step reaction: tyrosine is first activated by ATP to form Tyr-AMP and then transferred to the acceptor end of tRNA(Tyr). This chain is Tyrosine--tRNA ligase, found in Clostridium botulinum (strain Loch Maree / Type A3).